We begin with the raw amino-acid sequence, 156 residues long: Small ribosomal subunit protein uS7c (156 aa).

Belongs to the universal ribosomal protein uS7 family. As to quaternary structure, part of the 30S ribosomal subunit.

Its subcellular location is the plastid. The protein localises to the chloroplast. Functionally, one of the primary rRNA binding proteins, it binds directly to 16S rRNA where it nucleates assembly of the head domain of the 30S subunit. In Stangeria eriopus (Natal grass cycad), this protein is Small ribosomal subunit protein uS7c (rps7).